Reading from the N-terminus, the 777-residue chain is Endonuclease MutS2 (777 aa).

328 to 335 contacts ATP; it reads GPNTGGKT. Residues 702–777 form the Smr domain; the sequence is LDLRGKRYEE…GSGATIVIFK (76 aa).

This sequence belongs to the DNA mismatch repair MutS family. MutS2 subfamily. As to quaternary structure, homodimer. Binds to stalled ribosomes, contacting rRNA.

In terms of biological role, endonuclease that is involved in the suppression of homologous recombination and thus may have a key role in the control of bacterial genetic diversity. Functionally, acts as a ribosome collision sensor, splitting the ribosome into its 2 subunits. Detects stalled/collided 70S ribosomes which it binds and splits by an ATP-hydrolysis driven conformational change. Acts upstream of the ribosome quality control system (RQC), a ribosome-associated complex that mediates the extraction of incompletely synthesized nascent chains from stalled ribosomes and their subsequent degradation. Probably generates substrates for RQC. The polypeptide is Endonuclease MutS2 (Streptococcus gordonii (strain Challis / ATCC 35105 / BCRC 15272 / CH1 / DL1 / V288)).